The following is a 221-amino-acid chain: Putative N-acetylmannosamine-6-phosphate 2-epimerase (221 aa).

This sequence belongs to the NanE family.

It carries out the reaction an N-acyl-D-glucosamine 6-phosphate = an N-acyl-D-mannosamine 6-phosphate. It functions in the pathway amino-sugar metabolism; N-acetylneuraminate degradation; D-fructose 6-phosphate from N-acetylneuraminate: step 3/5. In terms of biological role, converts N-acetylmannosamine-6-phosphate (ManNAc-6-P) to N-acetylglucosamine-6-phosphate (GlcNAc-6-P). In Clostridium perfringens (strain SM101 / Type A), this protein is Putative N-acetylmannosamine-6-phosphate 2-epimerase.